The following is a 424-amino-acid chain: UDP-N-acetylglucosamine 1-carboxyvinyltransferase (424 aa).

22–23 contacts phosphoenolpyruvate; the sequence is KN. UDP-N-acetyl-alpha-D-glucosamine is bound at residue R98. C122 (proton donor) is an active-site residue. The residue at position 122 (C122) is a 2-(S-cysteinyl)pyruvic acid O-phosphothioketal. UDP-N-acetyl-alpha-D-glucosamine is bound by residues 127 to 131, D312, and I334; that span reads RPVDQ.

This sequence belongs to the EPSP synthase family. MurA subfamily.

It is found in the cytoplasm. The catalysed reaction is phosphoenolpyruvate + UDP-N-acetyl-alpha-D-glucosamine = UDP-N-acetyl-3-O-(1-carboxyvinyl)-alpha-D-glucosamine + phosphate. It participates in cell wall biogenesis; peptidoglycan biosynthesis. In terms of biological role, cell wall formation. Adds enolpyruvyl to UDP-N-acetylglucosamine. The polypeptide is UDP-N-acetylglucosamine 1-carboxyvinyltransferase (Xanthomonas oryzae pv. oryzae (strain MAFF 311018)).